Here is a 571-residue protein sequence, read N- to C-terminus: GABA-specific permease (571 aa).

Residues 1–73 (MSMSSKNENK…IGYKQELKRQ (73 aa)) are Cytoplasmic-facing. The helical transmembrane segment at 74–94 (FSTLQVFGIAFSIMGLLPSIA) threads the bilayer. Topologically, residues 95–105 (SVMGGGLGGGP) are vacuolar. Residues 106-126 (ATLVWGWFVAAFFILLVGITM) traverse the membrane as a helical segment. The Cytoplasmic portion of the chain corresponds to 127-153 (AEHASSIPTAGGLYYWTYYYAPEGYKE). The helical transmembrane segment at 154-174 (IISFIIGCSNSLALAAGVCSI) threads the bilayer. The Vacuolar portion of the chain corresponds to 175 to 198 (DYGLAEEIAAAVTLTKDGNFEVTS). Residues 199 to 219 (GKLYGIFAGAVVVMCICTCVA) form a helical membrane-spanning segment. The Cytoplasmic segment spans residues 220–228 (SGAIARLQT). Residues 229 to 249 (LSIFANLFIIVLLFIALPIGT) form a helical membrane-spanning segment. At 250-271 (KHRMGGFNDGDFIFGKYENLSD) the chain is on the vacuolar side. A helical transmembrane segment spans residues 272 to 292 (WNNGWQFCLAGFMPAVWTIGS). Residues 293 to 312 (FDSCVHQSEEAKDAKKSVPI) lie on the Cytoplasmic side of the membrane. Residues 313–333 (GIISSIAVCWILGWLIIICLM) traverse the membrane as a helical segment. Topologically, residues 334 to 364 (ACINPDIDSVLDSKYGFALAQIIYDSLGKKW) are vacuolar. A helical membrane pass occupies residues 365–385 (AIAFMSLIAFCQFLMGASITT). The Cytoplasmic portion of the chain corresponds to 386 to 416 (AVSRQVWAFSRDNGLPLSKYIKRVDSKYSVP). Residues 417-437 (FFAILAACVGSLILGLLCLID) traverse the membrane as a helical segment. At 438–441 (DAAT) the chain is on the vacuolar side. Residues 442–462 (DALFSLAVAGNNLAWSTPTVF) traverse the membrane as a helical segment. Residues 463–482 (RLTSGRDLFRPGPFYLGKIW) lie on the Cytoplasmic side of the membrane. The chain crosses the membrane as a helical span at residues 483–503 (SPIVAWTGVAFQLFIIILVMF). Over 504–514 (PSQQHGITKST) the chain is Vacuolar. Residues 515–535 (MNYACVIGPGIWILAGIYYKV) form a helical membrane-spanning segment. Residues 536–571 (YKKKYYHGPATNLSDDDYTEAVGADVIDTIMSKQEP) lie on the Cytoplasmic side of the membrane.

It belongs to the amino acid-polyamine-organocation (APC) superfamily. Amino acid/choline transporter (ACT) (TC 2.A.3.4) family.

It is found in the vacuole membrane. In terms of biological role, required for high-affinity, high-specificity GABA transport. Also transports putrescine. The chain is GABA-specific permease (UGA4) from Saccharomyces cerevisiae (strain ATCC 204508 / S288c) (Baker's yeast).